We begin with the raw amino-acid sequence, 113 residues long: Dolichyl-diphosphooligosaccharide--protein glycosyltransferase subunit DAD1 (113 aa).

Serine 2 is modified (N-acetylserine). The Cytoplasmic segment spans residues 2–30 (SASVVSVISRFLEEYLSSTPQRLKLLDAY). The chain crosses the membrane as a helical span at residues 31 to 51 (LLYILLTGALQFGYCLLVGTF). Position 52 (proline 52) is a topological domain, lumenal. Residues 53-73 (FNSFLSGFISCVGSFILAVRL) traverse the membrane as a helical segment. Residues 74 to 92 (RIQINPQNKADFQGISPER) lie on the Cytoplasmic side of the membrane. The helical transmembrane segment at 93–113 (AFADFLFASTILHLVVMNFVG) threads the bilayer.

It belongs to the DAD/OST2 family. As to quaternary structure, component of the oligosaccharyltransferase (OST) complex. OST exists in two different complex forms which contain common core subunits RPN1, RPN2, OST48, OST4, DAD1 and TMEM258, either STT3A or STT3B as catalytic subunits, and form-specific accessory subunits. STT3A complex assembly occurs through the formation of 3 subcomplexes. Subcomplex 1 contains RPN1 and TMEM258, subcomplex 2 contains the STT3A-specific subunits STT3A, DC2/OSTC, and KCP2 as well as the core subunit OST4, and subcomplex 3 contains RPN2, DAD1, and OST48. The STT3A complex can form stable complexes with the Sec61 complex or with both the Sec61 and TRAP complexes.

Its subcellular location is the endoplasmic reticulum membrane. It participates in protein modification; protein glycosylation. In terms of biological role, subunit of the oligosaccharyl transferase (OST) complex that catalyzes the initial transfer of a defined glycan (Glc(3)Man(9)GlcNAc(2) in eukaryotes) from the lipid carrier dolichol-pyrophosphate to an asparagine residue within an Asn-X-Ser/Thr consensus motif in nascent polypeptide chains, the first step in protein N-glycosylation. N-glycosylation occurs cotranslationally and the complex associates with the Sec61 complex at the channel-forming translocon complex that mediates protein translocation across the endoplasmic reticulum (ER). All subunits are required for a maximal enzyme activity. The polypeptide is Dolichyl-diphosphooligosaccharide--protein glycosyltransferase subunit DAD1 (Pongo abelii (Sumatran orangutan)).